The sequence spans 163 residues: Glycine cleavage system H-like protein gcvH5, mitochondrial (163 aa).

Residues 1 to 23 (MFLFKTTNNLRKSLSNKFFCTRY) constitute a mitochondrion transit peptide. Positions 50–136 (IGTLGLTENG…MSKGWLCKIK (87 aa)) constitute a Lipoyl-binding domain.

This sequence belongs to the GcvH family.

The protein localises to the mitochondrion. The chain is Glycine cleavage system H-like protein gcvH5, mitochondrial (gcvH5) from Dictyostelium discoideum (Social amoeba).